We begin with the raw amino-acid sequence, 811 residues long: Phenylalanine--tRNA ligase beta subunit (811 aa).

The region spanning 39-151 (RTWAAGVVVG…AGLQAGQPVG (113 aa)) is the tRNA-binding domain. In terms of domain architecture, B5 spans 409-495 (EPEHSITLRL…RLYGYDNFGE (87 aa)). Positions 473, 479, 482, and 483 each coordinate Mg(2+). One can recognise an FDX-ACB domain in the interval 717–810 (SSFPASDRDL…LVERFRVTLR (94 aa)).

Belongs to the phenylalanyl-tRNA synthetase beta subunit family. Type 1 subfamily. As to quaternary structure, tetramer of two alpha and two beta subunits. Mg(2+) is required as a cofactor.

Its subcellular location is the cytoplasm. It catalyses the reaction tRNA(Phe) + L-phenylalanine + ATP = L-phenylalanyl-tRNA(Phe) + AMP + diphosphate + H(+). The protein is Phenylalanine--tRNA ligase beta subunit of Synechococcus sp. (strain ATCC 27144 / PCC 6301 / SAUG 1402/1) (Anacystis nidulans).